Reading from the N-terminus, the 657-residue chain is Histidine ammonia-lyase (657 aa).

The segment at residues 253 to 255 is a cross-link (5-imidazolinone (Ala-Gly)); it reads ASG. A 2,3-didehydroalanine (Ser) modification is found at S254. Position 396 is a phosphothreonine (T396). The residue at position 635 (S635) is a Phosphoserine. Phosphothreonine is present on T637. S648 carries the phosphoserine modification.

Belongs to the PAL/histidase family. Contains an active site 4-methylidene-imidazol-5-one (MIO), which is formed autocatalytically by cyclization and dehydration of residues Ala-Ser-Gly. Liver and skin.

The catalysed reaction is L-histidine = trans-urocanate + NH4(+). It functions in the pathway amino-acid degradation; L-histidine degradation into L-glutamate; N-formimidoyl-L-glutamate from L-histidine: step 1/3. This is Histidine ammonia-lyase (Hal) from Rattus norvegicus (Rat).